Here is a 347-residue protein sequence, read N- to C-terminus: DNA-directed RNA polymerase subunit alpha (347 aa).

Positions 1 to 226 (MLISQRPTLS…ELFGLARELN (226 aa)) are alpha N-terminal domain (alpha-NTD). An alpha C-terminal domain (alpha-CTD) region spans residues 243–347 (HIASFALPID…EQDYAETEQL (105 aa)).

This sequence belongs to the RNA polymerase alpha chain family. Homodimer. The RNAP catalytic core consists of 2 alpha, 1 beta, 1 beta' and 1 omega subunit. When a sigma factor is associated with the core the holoenzyme is formed, which can initiate transcription.

It carries out the reaction RNA(n) + a ribonucleoside 5'-triphosphate = RNA(n+1) + diphosphate. In terms of biological role, DNA-dependent RNA polymerase catalyzes the transcription of DNA into RNA using the four ribonucleoside triphosphates as substrates. This is DNA-directed RNA polymerase subunit alpha from Mycobacterium bovis (strain ATCC BAA-935 / AF2122/97).